We begin with the raw amino-acid sequence, 370 residues long: Anhydro-N-acetylmuramic acid kinase (370 aa).

Residue Gly13–Asp20 participates in ATP binding.

It belongs to the anhydro-N-acetylmuramic acid kinase family.

It catalyses the reaction 1,6-anhydro-N-acetyl-beta-muramate + ATP + H2O = N-acetyl-D-muramate 6-phosphate + ADP + H(+). The protein operates within amino-sugar metabolism; 1,6-anhydro-N-acetylmuramate degradation. Its pathway is cell wall biogenesis; peptidoglycan recycling. Functionally, catalyzes the specific phosphorylation of 1,6-anhydro-N-acetylmuramic acid (anhMurNAc) with the simultaneous cleavage of the 1,6-anhydro ring, generating MurNAc-6-P. Is required for the utilization of anhMurNAc either imported from the medium or derived from its own cell wall murein, and thus plays a role in cell wall recycling. In Vibrio vulnificus (strain CMCP6), this protein is Anhydro-N-acetylmuramic acid kinase.